The following is a 112-amino-acid chain: METLLGLLILWLQLQWVSSKQEVTQIPAALSVPEGENLVLNCSFTDSAIYNLQWFRQDPGKGLTSLLLIQSSQREQTSGRLNASLDKSSGRSTLYIAASQPGDSATYLCAVR.

An N-terminal signal peptide occupies residues 1–19 (METLLGLLILWLQLQWVSS). The Ig-like domain occupies 21 to 112 (QEVTQIPAAL…DSATYLCAVR (92 aa)). N-linked (GlcNAc...) asparagine glycosylation is found at Asn-41 and Asn-82. Cys-42 and Cys-109 are joined by a disulfide.

Alpha-beta TR is a heterodimer composed of an alpha and beta chain; disulfide-linked. The alpha-beta TR is associated with the transmembrane signaling CD3 coreceptor proteins to form the TR-CD3 (TcR or TCR). The assembly of alpha-beta TR heterodimers with CD3 occurs in the endoplasmic reticulum where a single alpha-beta TR heterodimer associates with one CD3D-CD3E heterodimer, one CD3G-CD3E heterodimer and one CD247 homodimer forming a stable octameric structure. CD3D-CD3E and CD3G-CD3E heterodimers preferentially associate with TR alpha and TR beta chains, respectively. The association of the CD247 homodimer is the last step of TcR assembly in the endoplasmic reticulum and is required for transport to the cell surface.

The protein localises to the cell membrane. Functionally, v region of the variable domain of T cell receptor (TR) alpha chain that participates in the antigen recognition. Alpha-beta T cell receptors are antigen specific receptors which are essential to the immune response and are present on the cell surface of T lymphocytes. Recognize peptide-major histocompatibility (MH) (pMH) complexes that are displayed by antigen presenting cells (APC), a prerequisite for efficient T cell adaptive immunity against pathogens. Binding of alpha-beta TR to pMH complex initiates TR-CD3 clustering on the cell surface and intracellular activation of LCK that phosphorylates the ITAM motifs of CD3G, CD3D, CD3E and CD247 enabling the recruitment of ZAP70. In turn ZAP70 phosphorylates LAT, which recruits numerous signaling molecules to form the LAT signalosome. The LAT signalosome propagates signal branching to three major signaling pathways, the calcium, the mitogen-activated protein kinase (MAPK) kinase and the nuclear factor NF-kappa-B (NF-kB) pathways, leading to the mobilization of transcription factors that are critical for gene expression and essential for T cell growth and differentiation. The T cell repertoire is generated in the thymus, by V-(D)-J rearrangement. This repertoire is then shaped by intrathymic selection events to generate a peripheral T cell pool of self-MH restricted, non-autoaggressive T cells. Post-thymic interaction of alpha-beta TR with the pMH complexes shapes TR structural and functional avidity. This chain is T cell receptor alpha variable 21, found in Homo sapiens (Human).